The following is a 668-amino-acid chain: WD repeat-containing protein 48 homolog (668 aa).

8 WD repeats span residues 26–65 (QHRNGVNALQLDANNGKLYSAGRDAIIRVWNTRTDSSEKY), 71–110 (HHNDWVNDIVLCCNGRNLISASCDTTVKVWNAQKGFCMST), 113–152 (THRDYVQALAYAKDREQVASAGLDKAIFLWDVNTLTALTA), 164–203 (GSKDSIYSLAMNPSGTVIVSGSTENILRIWDPRTCMRRMK), 206–245 (GHTENVRCLVVSPDGNQVVSGSSDGTIKVWNLGQQRCVQT), 248–287 (VHKEGVWSLLMSENFQYIISGSRDRNIIVTEMRNPSNKTL), 290–329 (EEQAPVLSLGYNIDKTGVWATTWNSDIRCWKLPMYDRCTL), and 350–389 (KGGAAIKECAVLNDKRYIITKDSQDQVVVYDVLRVVKKEQ). Positions 592-616 (ETTPSGGNANNSLQNSQSDANSEGS) are disordered.

Belongs to the WD repeat WDR48 family. As to quaternary structure, catalytic component of the Usp12-46 deubiquitylase complex consisting of Usp12-46, Wdr20 and Uaf1; regulatory subunit that, together wtih Wdr20, stabilizes Usp12-46. The Usp12-46 deubiquitylase complex associates with arr/arrow; the interaction leads to deubiquitination and stabilization of arr/arrow.

Regulatory component of the Usp12-46 deubiquitylase complex. activates deubiquitination by increasing the catalytic turnover without increasing the affinity of deubiquitinating enzymes for the substrate. The complex deubiquitylates the wg/wingless-signaling receptor arr/arrow, which stabilizes the receptor and increases its concentration at the cell surface; this enhances the sensitivity of cells to wg/wingless-signal stimulation. This increases the amplitude and spatial range of the signaling response to the wg/wingless morphogen gradient, facilitating the precise concentration-dependent regulation of its target genes. Together with Wdr20 and Usp12-46 required for wg/wingless-mediated signaling in the wing imaginal disc and for wg/wingless-dependent regulation of intestinal stem cell proliferation. The sequence is that of WD repeat-containing protein 48 homolog from Drosophila melanogaster (Fruit fly).